Reading from the N-terminus, the 219-residue chain is Probable nicotinate-nucleotide adenylyltransferase (219 aa).

The protein belongs to the NadD family.

It carries out the reaction nicotinate beta-D-ribonucleotide + ATP + H(+) = deamido-NAD(+) + diphosphate. Its pathway is cofactor biosynthesis; NAD(+) biosynthesis; deamido-NAD(+) from nicotinate D-ribonucleotide: step 1/1. Its function is as follows. Catalyzes the reversible adenylation of nicotinate mononucleotide (NaMN) to nicotinic acid adenine dinucleotide (NaAD). The protein is Probable nicotinate-nucleotide adenylyltransferase of Enterococcus faecalis (strain ATCC 700802 / V583).